The sequence spans 80 residues: Homeobox protein 7 (80 aa).

Positions 8 to 67 form a DNA-binding region, homeobox; the sequence is SNIRNIRSSGISTKKLEDFFSINQYPNKNEIKDFANYYQCDETKIKNWFKGKRDRLKKKS. The interval 60–80 is disordered; sequence RDRLKKKSSNNEKSGNKFYFK. Residues 70 to 80 are compositionally biased toward low complexity; the sequence is NEKSGNKFYFK.

The protein resides in the nucleus. Functionally, putative transcription factor. The protein is Homeobox protein 7 (hbx7) of Dictyostelium discoideum (Social amoeba).